Reading from the N-terminus, the 319-residue chain is Acetyl-coenzyme A carboxylase carboxyl transferase subunit alpha (319 aa).

A CoA carboxyltransferase C-terminal domain is found at 38 to 292 (ALDKKAADLL…GKAIASMLAG (255 aa)).

Belongs to the AccA family. Acetyl-CoA carboxylase is a heterohexamer composed of biotin carboxyl carrier protein (AccB), biotin carboxylase (AccC) and two subunits each of ACCase subunit alpha (AccA) and ACCase subunit beta (AccD).

It is found in the cytoplasm. The catalysed reaction is N(6)-carboxybiotinyl-L-lysyl-[protein] + acetyl-CoA = N(6)-biotinyl-L-lysyl-[protein] + malonyl-CoA. Its pathway is lipid metabolism; malonyl-CoA biosynthesis; malonyl-CoA from acetyl-CoA: step 1/1. Its function is as follows. Component of the acetyl coenzyme A carboxylase (ACC) complex. First, biotin carboxylase catalyzes the carboxylation of biotin on its carrier protein (BCCP) and then the CO(2) group is transferred by the carboxyltransferase to acetyl-CoA to form malonyl-CoA. The polypeptide is Acetyl-coenzyme A carboxylase carboxyl transferase subunit alpha (Jannaschia sp. (strain CCS1)).